The following is a 309-amino-acid chain: Ribosomal protein L11 methyltransferase (309 aa).

S-adenosyl-L-methionine is bound by residues T160, G181, D203, and N245.

Belongs to the methyltransferase superfamily. PrmA family.

It localises to the cytoplasm. The enzyme catalyses L-lysyl-[protein] + 3 S-adenosyl-L-methionine = N(6),N(6),N(6)-trimethyl-L-lysyl-[protein] + 3 S-adenosyl-L-homocysteine + 3 H(+). Functionally, methylates ribosomal protein L11. The sequence is that of Ribosomal protein L11 methyltransferase from Caldanaerobacter subterraneus subsp. tengcongensis (strain DSM 15242 / JCM 11007 / NBRC 100824 / MB4) (Thermoanaerobacter tengcongensis).